Here is a 461-residue protein sequence, read N- to C-terminus: Regulatory protein AtoC (461 aa).

Residues 6–120 (RILIVDDEDN…ELNLIVQRAL (115 aa)) enclose the Response regulatory domain. Asp-55 bears the 4-aspartylphosphate mark. Residue His-73 is modified to Phosphohistidine. A Sigma-54 factor interaction domain is found at 145–374 (ILTNSPAMMD…LSNVIERAVV (230 aa)). ATP contacts are provided by residues 173–180 (GESGTGKE) and 236–245 (ANEGTLLLDE). The H-T-H motif DNA-binding region spans 433 to 452 (RTRTALMLGISRRALMYKLQ).

Post-translationally, phosphorylated by AtoS. Contains two phosphorylation sites, which are both involved in the transduction of the acetoacetate signal. Asp-55 is probably the primary phosphorylation site, but either both residues can be phosphorylated independently by AtoS or the phosphate group can be transferred between them. In terms of processing, the N-terminus is blocked.

The protein resides in the cytoplasm. Functionally, member of the two-component regulatory system AtoS/AtoC. In the presence of acetoacetate, AtoS/AtoC stimulates the expression of the atoDAEB operon, leading to short chain fatty acid catabolism and activation of the poly-(R)-3-hydroxybutyrate (cPHB) biosynthetic pathway. Also induces the operon in response to spermidine. Involved in the regulation of motility and chemotaxis, via transcriptional induction of the flagellar regulon. AtoC acts by binding directly to the promoter region of the target genes. In addition to its role as a transcriptional regulator, functions as a post-translational regulator that inhibits polyamine biosynthesis via regulation of ornithine decarboxylase (ODC). In Escherichia coli (strain K12), this protein is Regulatory protein AtoC (atoC).